The sequence spans 95 residues: Large ribosomal subunit protein bL25 (95 aa).

The segment at 1-20 (MSFKFNAEVRSKQGKGASRR) is disordered.

Belongs to the bacterial ribosomal protein bL25 family. In terms of assembly, part of the 50S ribosomal subunit; part of the 5S rRNA/L5/L18/L25 subcomplex. Contacts the 5S rRNA. Binds to the 5S rRNA independently of L5 and L18.

In terms of biological role, this is one of the proteins that binds to the 5S RNA in the ribosome where it forms part of the central protuberance. This chain is Large ribosomal subunit protein bL25, found in Histophilus somni (strain 129Pt) (Haemophilus somnus).